Consider the following 304-residue polypeptide: Polyisoprenyl-teichoic acid--peptidoglycan teichoic acid transferase TagU (304 aa).

The Cytoplasmic segment spans residues 1–4 (MKKK). The chain crosses the membrane as a helical; Signal-anchor for type II membrane protein span at residues 5–25 (ILFWILGIIGIMIIGGGVYAY). Residues 26 to 304 (NVYSSVSKTL…KLRAHLELTK (279 aa)) are Extracellular-facing.

The protein belongs to the LytR/CpsA/Psr (LCP) family.

It is found in the cell membrane. The protein operates within cell wall biogenesis. Its function is as follows. May catalyze the final step in cell wall teichoic acid biosynthesis, the transfer of the anionic cell wall polymers (APs) from their lipid-linked precursor to the cell wall peptidoglycan (PG). This is Polyisoprenyl-teichoic acid--peptidoglycan teichoic acid transferase TagU from Bacillus mycoides (strain KBAB4) (Bacillus weihenstephanensis).